Reading from the N-terminus, the 113-residue chain is Cysteine proteinase inhibitor 6 (113 aa).

The first 18 residues, 1 to 18, serve as a signal peptide directing secretion; sequence MAMTTRTLLLAAVCAAAA. Positions 65 to 69 match the Secondary area of contact motif; sequence QVVSG.

The protein belongs to the cystatin family. Phytocystatin subfamily.

It is found in the secreted. Specific inhibitor of cysteine proteinases. Probably involved in the regulation of endogenous processes and in defense against pests and pathogens. The polypeptide is Cysteine proteinase inhibitor 6 (Oryza sativa subsp. japonica (Rice)).